The chain runs to 185 residues: Ribosome-recycling factor (185 aa).

The disordered stretch occupies residues 137–158 (DELKKLEKDHTASEDEVKRAQD).

It belongs to the RRF family.

It localises to the cytoplasm. Functionally, responsible for the release of ribosomes from messenger RNA at the termination of protein biosynthesis. May increase the efficiency of translation by recycling ribosomes from one round of translation to another. This chain is Ribosome-recycling factor, found in Desulfitobacterium hafniense (strain Y51).